Reading from the N-terminus, the 84-residue chain is Beta-mammal Tt1g (84 aa).

The signal sequence occupies residues 1 to 20; it reads MKGMILFISCILLIGIVVEC. The LCN-type CS-alpha/beta domain occupies 21 to 82; it reads KEGYLMDHEG…VWERATNRCG (62 aa). 4 disulfides stabilise this stretch: C31/C81, C35/C57, C43/C62, and C47/C64. Position 81 is a cysteine amide (C81).

Belongs to the long (4 C-C) scorpion toxin superfamily. Sodium channel inhibitor family. Beta subfamily. In terms of tissue distribution, expressed by the venom gland.

It is found in the secreted. In terms of biological role, beta toxins modify sodium channel function in two ways: an excitatory effect (shifting the activation process to more negative potential) and/or a depressant effect (reducing the peak current). At concentration of 500 nM this toxin produces channel opening at more negative potentials in hNav1.2/SCN2A and hNav1.3/SCN3A, which shows the biggest effect. On the other hand the peak current is decreased in hNav1.4/SCN4A and hNav1.5/SCN5A channels, without apparent modification of the activation gate. This toxin is active against mammals. This Tityus trivittatus (Argentinean scorpion) protein is Beta-mammal Tt1g.